The following is a 192-amino-acid chain: Peptidyl-tRNA hydrolase (192 aa).

Tyr17 contacts tRNA. His22 acts as the Proton acceptor in catalysis. Phe68, Asn70, and Asn116 together coordinate tRNA.

The protein belongs to the PTH family. In terms of assembly, monomer.

The protein localises to the cytoplasm. The enzyme catalyses an N-acyl-L-alpha-aminoacyl-tRNA + H2O = an N-acyl-L-amino acid + a tRNA + H(+). Functionally, hydrolyzes ribosome-free peptidyl-tRNAs (with 1 or more amino acids incorporated), which drop off the ribosome during protein synthesis, or as a result of ribosome stalling. In terms of biological role, catalyzes the release of premature peptidyl moieties from peptidyl-tRNA molecules trapped in stalled 50S ribosomal subunits, and thus maintains levels of free tRNAs and 50S ribosomes. The protein is Peptidyl-tRNA hydrolase of Buchnera aphidicola subsp. Cinara cedri (strain Cc).